Consider the following 113-residue polypeptide: Large ribosomal subunit protein eL31A (113 aa).

It belongs to the eukaryotic ribosomal protein eL31 family. Component of the large ribosomal subunit (LSU). Mature yeast ribosomes consist of a small (40S) and a large (60S) subunit. The 40S small subunit contains 1 molecule of ribosomal RNA (18S rRNA) and 33 different proteins (encoded by 57 genes). The large 60S subunit contains 3 rRNA molecules (25S, 5.8S and 5S rRNA) and 46 different proteins (encoded by 81 genes).

It is found in the cytoplasm. Functionally, component of the ribosome, a large ribonucleoprotein complex responsible for the synthesis of proteins in the cell. The small ribosomal subunit (SSU) binds messenger RNAs (mRNAs) and translates the encoded message by selecting cognate aminoacyl-transfer RNA (tRNA) molecules. The large subunit (LSU) contains the ribosomal catalytic site termed the peptidyl transferase center (PTC), which catalyzes the formation of peptide bonds, thereby polymerizing the amino acids delivered by tRNAs into a polypeptide chain. The nascent polypeptides leave the ribosome through a tunnel in the LSU and interact with protein factors that function in enzymatic processing, targeting, and the membrane insertion of nascent chains at the exit of the ribosomal tunnel. This chain is Large ribosomal subunit protein eL31A, found in Saccharomyces cerevisiae (strain ATCC 204508 / S288c) (Baker's yeast).